A 248-amino-acid chain; its full sequence is Ribosomal RNA small subunit methyltransferase G (248 aa).

Residues Gly85, Phe90, 108 to 110 (DSS), 137 to 138 (AE), and Arg156 contribute to the S-adenosyl-L-methionine site.

It belongs to the methyltransferase superfamily. RNA methyltransferase RsmG family.

The protein resides in the cytoplasm. Functionally, specifically methylates the N7 position of a guanine in 16S rRNA. This chain is Ribosomal RNA small subunit methyltransferase G, found in Prochlorococcus marinus (strain NATL2A).